The sequence spans 187 residues: Ubiquinol-cytochrome c reductase iron-sulfur subunit (187 aa).

A helical membrane pass occupies residues 15–35 (LYYATAGAGAVATGAAVWPLI). The region spanning 89–185 (QLGQLVDTNA…AKFIDETTIQ (97 aa)) is the Rieske domain. The [2Fe-2S] cluster site is built by Cys-129, His-131, Cys-149, and His-152. A disulfide bond links Cys-134 and Cys-151.

Belongs to the Rieske iron-sulfur protein family. In terms of assembly, the main subunits of complex b-c1 are: cytochrome b, cytochrome c1 and the Rieske protein. The cofactor is [2Fe-2S] cluster.

It localises to the cell membrane. It catalyses the reaction a quinol + 2 Fe(III)-[cytochrome c](out) = a quinone + 2 Fe(II)-[cytochrome c](out) + 2 H(+)(out). Its function is as follows. Component of the ubiquinol-cytochrome c reductase complex (complex III or cytochrome b-c1 complex), which is a respiratory chain that generates an electrochemical potential coupled to ATP synthesis. This chain is Ubiquinol-cytochrome c reductase iron-sulfur subunit (petA), found in Cereibacter sphaeroides (Rhodobacter sphaeroides).